A 530-amino-acid polypeptide reads, in one-letter code: Synembryn-like chaperone C3E7.04c (530 aa).

The helical transmembrane segment at 492–512 (SFIYHCYHSFVGPIHILLLMF) threads the bilayer.

It belongs to the synembryn family.

The protein resides in the membrane. Functionally, chaperone that specifically binds and folds some, but not all, nascent G alpha proteins prior to G protein heterotrimer formation, promoting their stability and activity. Also acts as a guanine nucleotide exchange factor (GEF) for G alpha proteins by stimulating exchange of bound GDP for free GTP. In Schizosaccharomyces pombe (strain 972 / ATCC 24843) (Fission yeast), this protein is Synembryn-like chaperone C3E7.04c.